The sequence spans 324 residues: Acetyl-coenzyme A carboxylase carboxyl transferase subunit alpha (324 aa).

Positions 37-291 (ILEDKLENLE…DLMLRKTFEQ (255 aa)) constitute a CoA carboxyltransferase C-terminal domain.

It belongs to the AccA family. In terms of assembly, acetyl-CoA carboxylase is a heterohexamer composed of biotin carboxyl carrier protein (AccB), biotin carboxylase (AccC) and two subunits each of ACCase subunit alpha (AccA) and ACCase subunit beta (AccD).

The protein localises to the cytoplasm. It carries out the reaction N(6)-carboxybiotinyl-L-lysyl-[protein] + acetyl-CoA = N(6)-biotinyl-L-lysyl-[protein] + malonyl-CoA. Its pathway is lipid metabolism; malonyl-CoA biosynthesis; malonyl-CoA from acetyl-CoA: step 1/1. In terms of biological role, component of the acetyl coenzyme A carboxylase (ACC) complex. First, biotin carboxylase catalyzes the carboxylation of biotin on its carrier protein (BCCP) and then the CO(2) group is transferred by the carboxyltransferase to acetyl-CoA to form malonyl-CoA. This Bacillus cereus (strain Q1) protein is Acetyl-coenzyme A carboxylase carboxyl transferase subunit alpha.